The chain runs to 348 residues: D-alanine--D-alanine ligase (348 aa).

The ATP-grasp domain maps to 132–334 (KRVLESAGIP…YAELIEELVR (203 aa)). 162–217 (EAVLSYPVFVKPANMGSSVGISKAESEEELRAAILLALTYDSRILIEQGVLAREIE) is an ATP binding site. The Mg(2+) site is built by D288, E301, and N303.

It belongs to the D-alanine--D-alanine ligase family. It depends on Mg(2+) as a cofactor. Requires Mn(2+) as cofactor.

It localises to the cytoplasm. The enzyme catalyses 2 D-alanine + ATP = D-alanyl-D-alanine + ADP + phosphate + H(+). Its pathway is cell wall biogenesis; peptidoglycan biosynthesis. Its function is as follows. Cell wall formation. The chain is D-alanine--D-alanine ligase from Streptococcus equi subsp. equi (strain 4047).